A 297-amino-acid polypeptide reads, in one-letter code: Putative heme-binding peroxidase (297 aa).

The Proton acceptor role is filled by H74. H198 lines the heme b pocket. The Tryptophan radical intermediate role is filled by W214.

Belongs to the peroxidase family. Cytochrome c peroxidase subfamily. Requires heme b as cofactor.

In terms of biological role, destroys radicals which are normally produced within the cells and which are toxic to biological systems. The polypeptide is Putative heme-binding peroxidase (Yarrowia lipolytica (strain CLIB 122 / E 150) (Yeast)).